We begin with the raw amino-acid sequence, 337 residues long: Phosphate acyltransferase (337 aa).

It belongs to the PlsX family. Homodimer. Probably interacts with PlsY.

It is found in the cytoplasm. It catalyses the reaction a fatty acyl-[ACP] + phosphate = an acyl phosphate + holo-[ACP]. Its pathway is lipid metabolism; phospholipid metabolism. Its function is as follows. Catalyzes the reversible formation of acyl-phosphate (acyl-PO(4)) from acyl-[acyl-carrier-protein] (acyl-ACP). This enzyme utilizes acyl-ACP as fatty acyl donor, but not acyl-CoA. The chain is Phosphate acyltransferase from Listeria innocua serovar 6a (strain ATCC BAA-680 / CLIP 11262).